The chain runs to 546 residues: Phenylalanine--tRNA ligase beta subunit (546 aa).

Residues 266–342 (LAPAERVVSV…IAYGIENFDA (77 aa)) enclose the B5 domain. The Mg(2+) site is built by Asp-320, Asp-326, Glu-329, and Asp-330.

It belongs to the phenylalanyl-tRNA synthetase beta subunit family. Type 2 subfamily. In terms of assembly, tetramer of two alpha and two beta subunits. Requires Mg(2+) as cofactor.

Its subcellular location is the cytoplasm. The enzyme catalyses tRNA(Phe) + L-phenylalanine + ATP = L-phenylalanyl-tRNA(Phe) + AMP + diphosphate + H(+). The chain is Phenylalanine--tRNA ligase beta subunit from Methanoculleus marisnigri (strain ATCC 35101 / DSM 1498 / JR1).